The chain runs to 77 residues: MDPSMANNPELLQFLAQEKERAMVNEMVSKMTSVCWDKCITSAPGSKFSSSESSCLTHCAQRYMDMSMIIMKRFNSQ.

At M1 the chain carries N-acetylmethionine. Residues 35 to 59 (CWDKCITSAPGSKFSSSESSCLTHC) carry the Twin CX3C motif motif. 2 disulfide bridges follow: C35–C59 and C39–C55.

This sequence belongs to the small Tim family. In terms of assembly, heterohexamer; composed of 3 copies of TIM8 and 3 copies of TIM13, named soluble 70 kDa complex. Associates with the TIM22 complex, whose core is composed of TIM22. As to expression, expressed in roots, flowers, young cotyledons and leaves.

The protein resides in the mitochondrion intermembrane space. Functionally, mitochondrial intermembrane chaperone that participates in the import and insertion of some multi-pass transmembrane proteins into the mitochondrial inner membrane. Also required for the transfer of beta-barrel precursors from the TOM complex to the sorting and assembly machinery (SAM complex) of the outer membrane. Acts as a chaperone-like protein that protects the hydrophobic precursors from aggregation and guide them through the mitochondrial intermembrane space. The TIM8-TIM13 complex mediates the import of some proteins while the predominant TIM9-TIM10 70 kDa complex mediates the import of much more proteins. This Arabidopsis thaliana (Mouse-ear cress) protein is Mitochondrial import inner membrane translocase subunit TIM8 (TIM8).